The following is a 105-amino-acid chain: Large ribosomal subunit protein bL21 (105 aa).

It belongs to the bacterial ribosomal protein bL21 family. Part of the 50S ribosomal subunit. Contacts protein L20.

Its function is as follows. This protein binds to 23S rRNA in the presence of protein L20. The chain is Large ribosomal subunit protein bL21 from Natranaerobius thermophilus (strain ATCC BAA-1301 / DSM 18059 / JW/NM-WN-LF).